Reading from the N-terminus, the 253-residue chain is Putative enoyl-CoA hydratase (253 aa).

The active site involves E131.

It belongs to the enoyl-CoA hydratase/isomerase family. Homohexamer; dimer of trimers.

The catalysed reaction is a (3S)-3-hydroxyacyl-CoA = a (2E)-enoyl-CoA + H2O. The sequence is that of Putative enoyl-CoA hydratase from Thermus thermophilus (strain ATCC 27634 / DSM 579 / HB8).